A 139-amino-acid chain; its full sequence is Holo-[acyl-carrier-protein] synthase (139 aa).

Residues aspartate 8 and glutamate 61 each coordinate Mg(2+).

The protein belongs to the P-Pant transferase superfamily. AcpS family. It depends on Mg(2+) as a cofactor.

It localises to the cytoplasm. It carries out the reaction apo-[ACP] + CoA = holo-[ACP] + adenosine 3',5'-bisphosphate + H(+). In terms of biological role, transfers the 4'-phosphopantetheine moiety from coenzyme A to a Ser of acyl-carrier-protein. The protein is Holo-[acyl-carrier-protein] synthase of Bradyrhizobium diazoefficiens (strain JCM 10833 / BCRC 13528 / IAM 13628 / NBRC 14792 / USDA 110).